A 50-amino-acid polypeptide reads, in one-letter code: MARYRCCRSQSQSRCRRRRRRRCRRRRRRCVRRRRVCCRRYTVLRCRRRR.

Cystine bridges form between C7–C15 and C38–C46.

The protein belongs to the protamine P1 family. In terms of assembly, cross-linked by interchain disulfide bonds around the DNA-helix. Testis.

It is found in the nucleus. It localises to the chromosome. Its function is as follows. Protamines substitute for histones in the chromatin of sperm during the haploid phase of spermatogenesis. They compact sperm DNA into a highly condensed, stable and inactive complex. The polypeptide is Sperm protamine P1 (PRM1) (Equus asinus (Donkey)).